Here is a 137-residue protein sequence, read N- to C-terminus: Protein FrxA (137 aa).

In Pyrococcus furiosus (strain ATCC 43587 / DSM 3638 / JCM 8422 / Vc1), this protein is Protein FrxA (frxA).